A 62-amino-acid chain; its full sequence is Photosystem II reaction center protein Z (62 aa).

2 helical membrane passes run 8–28 (ALAA…FAYA) and 41–61 (WVGS…NFFV).

Belongs to the PsbZ family. In terms of assembly, PSII is composed of 1 copy each of membrane proteins PsbA, PsbB, PsbC, PsbD, PsbE, PsbF, PsbH, PsbI, PsbJ, PsbK, PsbL, PsbM, PsbT, PsbX, PsbY, PsbZ, Psb30/Ycf12, peripheral proteins PsbO, CyanoQ (PsbQ), PsbU, PsbV and a large number of cofactors. It forms dimeric complexes.

The protein resides in the cellular thylakoid membrane. Functionally, may control the interaction of photosystem II (PSII) cores with the light-harvesting antenna, regulates electron flow through the 2 photosystem reaction centers. PSII is a light-driven water plastoquinone oxidoreductase, using light energy to abstract electrons from H(2)O, generating a proton gradient subsequently used for ATP formation. The chain is Photosystem II reaction center protein Z from Gloeothece citriformis (strain PCC 7424) (Cyanothece sp. (strain PCC 7424)).